Consider the following 124-residue polypeptide: uncharacterized protein (124 aa).

Residues 2-22 (AIIIAIIAAVIVIAALITFNV) form a helical membrane-spanning segment. The tract at residues 24–124 (NASPGPEKQE…ALLSMKNKKK (101 aa)) is disordered. 3 stretches are compositionally biased toward basic and acidic residues: residues 30–58 (EKQEATDRIAPPEEEKNEAHYPAEARAAE), 67–81 (DSPKEKRDTMGDDIY), and 89–113 (KHSDEVHAEEEVTEESDKMQDRSYR).

Its subcellular location is the membrane. This is an uncharacterized protein from Bacillus subtilis (strain 168).